Here is a 196-residue protein sequence, read N- to C-terminus: ATP-dependent Clp protease proteolytic subunit (196 aa).

Ser101 (nucleophile) is an active-site residue. His126 is an active-site residue.

This sequence belongs to the peptidase S14 family. As to quaternary structure, component of the chloroplastic Clp protease core complex.

It localises to the plastid. The protein localises to the chloroplast stroma. It carries out the reaction Hydrolysis of proteins to small peptides in the presence of ATP and magnesium. alpha-casein is the usual test substrate. In the absence of ATP, only oligopeptides shorter than five residues are hydrolyzed (such as succinyl-Leu-Tyr-|-NHMec, and Leu-Tyr-Leu-|-Tyr-Trp, in which cleavage of the -Tyr-|-Leu- and -Tyr-|-Trp bonds also occurs).. In terms of biological role, cleaves peptides in various proteins in a process that requires ATP hydrolysis. Has a chymotrypsin-like activity. Plays a major role in the degradation of misfolded proteins. This is ATP-dependent Clp protease proteolytic subunit from Populus trichocarpa (Western balsam poplar).